Reading from the N-terminus, the 60-residue chain is uncharacterized protein (60 aa).

Residues 33–55 (FRLLRGIFLITLVIWTVVWLKLL) form a helical membrane-spanning segment.

Belongs to the HHV-5 UL2 protein family.

It is found in the host membrane. This is an uncharacterized protein from Human cytomegalovirus (strain AD169) (HHV-5).